We begin with the raw amino-acid sequence, 547 residues long: Delta-guaiene synthase 2 (547 aa).

Mg(2+) is bound by residues D299, D303, and D444. A DDXXD motif motif is present at residues D299–D303.

It belongs to the terpene synthase family. Mg(2+) serves as cofactor.

The catalysed reaction is (2E,6E)-farnesyl diphosphate = delta-guaiene + diphosphate. The enzyme catalyses (2E,6E)-farnesyl diphosphate = alpha-guaiene + diphosphate. It participates in secondary metabolite biosynthesis; terpenoid biosynthesis. Its function is as follows. Sesquiterpene synthase involved in the biosynthesis of delta-guaiene (53.7%) and alpha-guaiene (44.6%), two structures composed of five- and seven-membered rings. Also produces 1.7% of alpha-humulene. The polypeptide is Delta-guaiene synthase 2 (C3) (Aquilaria crassna (Eagle wood)).